The chain runs to 20 residues: Chrysophsin-3 (20 aa).

H20 is subject to Histidine amide.

As to expression, gill.

The protein localises to the secreted. Functionally, has antibacterial activity against Gram-positive bacteria B.subtilis ATCC 6633, L.garvieae ATCC 49156 and S.iniae F-8502, and Gram-negative bacteria E.coli WT-2, V.anguillarum ATCC 19264, V.penaeicida KHA, V.harveyi ATCC 14126, V.vulnificus ATCC 33148, A.salmonicida NCMB 1102 and P.putida ATCC 12633. Has hemolytic activity against human red blood cells. Seems to disrupt the membranes by adopting an alpha helical conformation. May play a significant role in innate host defense. In Pagrus major (Red sea bream), this protein is Chrysophsin-3.